The chain runs to 525 residues: Lysine--tRNA ligase (525 aa).

Residues Glu-419 and Glu-426 each contribute to the Mg(2+) site.

It belongs to the class-II aminoacyl-tRNA synthetase family. Homodimer. Mg(2+) serves as cofactor.

It localises to the cytoplasm. It carries out the reaction tRNA(Lys) + L-lysine + ATP = L-lysyl-tRNA(Lys) + AMP + diphosphate. The polypeptide is Lysine--tRNA ligase (lysS) (Deinococcus radiodurans (strain ATCC 13939 / DSM 20539 / JCM 16871 / CCUG 27074 / LMG 4051 / NBRC 15346 / NCIMB 9279 / VKM B-1422 / R1)).